We begin with the raw amino-acid sequence, 137 residues long: Large ribosomal subunit protein uL16c (137 aa).

Belongs to the universal ribosomal protein uL16 family. Part of the 50S ribosomal subunit.

It localises to the plastid. The chain is Large ribosomal subunit protein uL16c from Cuscuta exaltata (Tall dodder).